Consider the following 103-residue polypeptide: Nucleoid-associated protein CFF8240_0066 (103 aa).

This sequence belongs to the YbaB/EbfC family. In terms of assembly, homodimer.

The protein resides in the cytoplasm. It is found in the nucleoid. Binds to DNA and alters its conformation. May be involved in regulation of gene expression, nucleoid organization and DNA protection. In Campylobacter fetus subsp. fetus (strain 82-40), this protein is Nucleoid-associated protein CFF8240_0066.